A 332-amino-acid polypeptide reads, in one-letter code: Delta-aminolevulinic acid dehydratase (332 aa).

Lys-202 acts as the Schiff-base intermediate with substrate in catalysis. Positions 212 and 225 each coordinate 5-aminolevulinate. Lys-256 (schiff-base intermediate with substrate) is an active-site residue. 5-aminolevulinate-binding residues include Ser-282 and Tyr-321.

Belongs to the ALAD family. Homohexamer.

It carries out the reaction 2 5-aminolevulinate = porphobilinogen + 2 H2O + H(+). Its pathway is porphyrin-containing compound metabolism; protoporphyrin-IX biosynthesis; coproporphyrinogen-III from 5-aminolevulinate: step 1/4. In terms of biological role, catalyzes an early step in the biosynthesis of tetrapyrroles. Binds two molecules of 5-aminolevulinate per subunit, each at a distinct site, and catalyzes their condensation to form porphobilinogen. This Rhodobacter capsulatus (Rhodopseudomonas capsulata) protein is Delta-aminolevulinic acid dehydratase (hemB).